The chain runs to 60 residues: uncharacterized protein (60 aa).

The interval 27–50 (VKNNNNNNNNNNNNNNNNNNNNNK) is disordered. Positions 29–49 (NNNNNNNNNNNNNNNNNNNNN) are enriched in low complexity.

This is an uncharacterized protein from Dictyostelium discoideum (Social amoeba).